We begin with the raw amino-acid sequence, 466 residues long: Ribulose bisphosphate carboxylase large chain (466 aa).

An N6,N6,N6-trimethyllysine modification is found at lysine 5. Residues asparagine 114 and threonine 164 each contribute to the substrate site. Lysine 166 acts as the Proton acceptor in catalysis. Residue lysine 168 participates in substrate binding. Positions 192, 194, and 195 each coordinate Mg(2+). Lysine 192 is subject to N6-carboxylysine. Histidine 285 serves as the catalytic Proton acceptor. Residues arginine 286, histidine 318, and serine 370 each coordinate substrate.

Belongs to the RuBisCO large chain family. Type I subfamily. As to quaternary structure, heterohexadecamer of 8 large chains and 8 small chains. Requires Mg(2+) as cofactor.

It is found in the plastid. The protein resides in the chloroplast. It carries out the reaction 2 (2R)-3-phosphoglycerate + 2 H(+) = D-ribulose 1,5-bisphosphate + CO2 + H2O. The catalysed reaction is D-ribulose 1,5-bisphosphate + O2 = 2-phosphoglycolate + (2R)-3-phosphoglycerate + 2 H(+). Functionally, ruBisCO catalyzes two reactions: the carboxylation of D-ribulose 1,5-bisphosphate, the primary event in carbon dioxide fixation, as well as the oxidative fragmentation of the pentose substrate in the photorespiration process. Both reactions occur simultaneously and in competition at the same active site. The sequence is that of Ribulose bisphosphate carboxylase large chain from Lobelia sp.